The following is an 84-amino-acid chain: Cell division topological specificity factor (84 aa).

This sequence belongs to the MinE family.

Its function is as follows. Prevents the cell division inhibition by proteins MinC and MinD at internal division sites while permitting inhibition at polar sites. This ensures cell division at the proper site by restricting the formation of a division septum at the midpoint of the long axis of the cell. The chain is Cell division topological specificity factor from Pseudomonas syringae pv. syringae (strain B728a).